Reading from the N-terminus, the 68-residue chain is Small cysteine-rich protein 5 (68 aa).

Residues 1–24 (MAVKFHLCLLLIILVGMGAHVAFA) form the signal peptide.

The protein belongs to the Cnidaria small cysteine-rich protein (SCRiP) family. gamma subfamily. In terms of processing, contains 4 disulfide bonds.

It is found in the secreted. It localises to the nematocyst. In terms of biological role, induces neurotoxic symptoms on zebrafish. Has also been claimed to be implied in calcification, but tests on homolog proteins suggest that proteins of this family have a neurotoxic function and not a calcification function. This is Small cysteine-rich protein 5 from Orbicella faveolata (Mountainous star coral).